Consider the following 256-residue polypeptide: 6-carboxyhexanoate--CoA ligase (256 aa).

The protein belongs to the BioW family. Homodimer. The cofactor is Mg(2+).

It catalyses the reaction heptanedioate + ATP + CoA = 6-carboxyhexanoyl-CoA + AMP + diphosphate. Its pathway is metabolic intermediate metabolism; pimeloyl-CoA biosynthesis; pimeloyl-CoA from pimelate: step 1/1. In terms of biological role, catalyzes the transformation of pimelate into pimeloyl-CoA with concomitant hydrolysis of ATP to AMP. The chain is 6-carboxyhexanoate--CoA ligase from Bacillus amyloliquefaciens (strain ATCC 23350 / DSM 7 / BCRC 11601 / CCUG 28519 / NBRC 15535 / NRRL B-14393 / F).